An 85-amino-acid polypeptide reads, in one-letter code: Protein MANBAL (85 aa).

The chain crosses the membrane as a helical span at residues 24-44 (YGLFLGAIFQLICVLAIIVPI). Over residues 49–64 (EAEAEQAEPRSAEGPK) the composition is skewed to basic and acidic residues. Residues 49-85 (EAEAEQAEPRSAEGPKKPKAAIASTNKRPKKETKKKR) form a disordered region. Residues 75 to 85 (KRPKKETKKKR) are compositionally biased toward basic residues.

Belongs to the UPF0239 family.

The protein localises to the membrane. The polypeptide is Protein MANBAL (Manbal) (Mus musculus (Mouse)).